The chain runs to 424 residues: Double homeobox protein 4-like protein 2 (424 aa).

The segment covering 1 to 10 (MALPTPSDST) has biased composition (polar residues). 5 disordered regions span residues 1 to 24 (MALPTPSDSTLPAEARGRGRRRRL), 72 to 102 (SRQLRQHRRESRPWPGRRGPPEGRRKRTAVT), 148 to 167 (RHPGQGGRAPAQAGGLCSAA), 218 to 362 (LQPS…LQEP), and 388 to 414 (QPLLETEAPGELEASEEAASLEAPLSE). DNA-binding regions (homeobox) lie at residues 19–78 (GRRR…LRQH) and 94–153 (GRRK…PGQG). The segment covering 265–274 (KSREDRDPQR) has biased composition (basic and acidic residues). 2 stretches are compositionally biased toward low complexity: residues 278–302 (PGPCAVAQPGPAQAGPQGQGVLAPP) and 319–329 (AGAAWEPQAGA).

It localises to the nucleus. Functionally, may be involved in transcriptional regulation. The sequence is that of Double homeobox protein 4-like protein 2 (DUX4L2) from Homo sapiens (Human).